Here is a 103-residue protein sequence, read N- to C-terminus: Large ribosomal subunit protein eL30 (103 aa).

The protein belongs to the eukaryotic ribosomal protein eL30 family.

In Methanothrix thermoacetophila (strain DSM 6194 / JCM 14653 / NBRC 101360 / PT) (Methanosaeta thermophila), this protein is Large ribosomal subunit protein eL30.